Consider the following 304-residue polypeptide: ATP phosphoribosyltransferase (304 aa).

The protein belongs to the ATP phosphoribosyltransferase family. Long subfamily. The cofactor is Mg(2+).

It is found in the cytoplasm. The enzyme catalyses 1-(5-phospho-beta-D-ribosyl)-ATP + diphosphate = 5-phospho-alpha-D-ribose 1-diphosphate + ATP. The protein operates within amino-acid biosynthesis; L-histidine biosynthesis; L-histidine from 5-phospho-alpha-D-ribose 1-diphosphate: step 1/9. Its activity is regulated as follows. Feedback inhibited by histidine. Catalyzes the condensation of ATP and 5-phosphoribose 1-diphosphate to form N'-(5'-phosphoribosyl)-ATP (PR-ATP). Has a crucial role in the pathway because the rate of histidine biosynthesis seems to be controlled primarily by regulation of HisG enzymatic activity. The sequence is that of ATP phosphoribosyltransferase from Xylella fastidiosa (strain M12).